A 239-amino-acid polypeptide reads, in one-letter code: Putative transcriptional regulator of 2-aminoethylphosphonate degradation operons (239 aa).

Positions 8–76 (IPQYLLIKAQ…DRRGWFVTPE (69 aa)) constitute an HTH gntR-type domain. Residues 36 to 55 (ERELCAIFNTTRITIRESLA) constitute a DNA-binding region (H-T-H motif).

In Salmonella paratyphi A (strain ATCC 9150 / SARB42), this protein is Putative transcriptional regulator of 2-aminoethylphosphonate degradation operons (phnR).